The primary structure comprises 248 residues: Zinc finger CCCH domain-containing protein 36 (248 aa).

Disordered stretches follow at residues 1 to 37 and 87 to 110; these read MDTRKRGRPEAGSFNSNGGGYKKSKQEMESYSTGLGS and MQGSGNGGRFSGRGESGPGHVSNF. The C3H1-type 1 zinc finger occupies 36–64; it reads GSKSKPCTKFFSTSGCPFGENCHFLHYVP. The span at 90-103 shows a compositional bias: gly residues; it reads SGNGGRFSGRGESG. A KH domain is found at 113-177; it reads SATARFSVDA…EQISEASAMV (65 aa). Residues 188–209 form a disordered region; sequence AKKPPGGGLGGGGGMGSEGKPH. The span at 192-204 shows a compositional bias: gly residues; it reads PGGGLGGGGGMGS. A C3H1-type 2 zinc finger spans residues 213–240; it reads NFKTKICERFSKGNCTFGDRCHFAHGEA.

The sequence is that of Zinc finger CCCH domain-containing protein 36 from Arabidopsis thaliana (Mouse-ear cress).